We begin with the raw amino-acid sequence, 519 residues long: Aspartokinase (519 aa).

Ser326 carries the post-translational modification Phosphoserine. At Thr328 the chain carries Phosphothreonine. The ACT domain occupies 436 to 518 (LVGKHMRNTT…MLVEKPWLYS (83 aa)).

This sequence belongs to the aspartokinase family.

It carries out the reaction L-aspartate + ATP = 4-phospho-L-aspartate + ADP. It participates in amino-acid biosynthesis; L-methionine biosynthesis via de novo pathway; L-homoserine from L-aspartate: step 1/3. Its pathway is amino-acid biosynthesis; L-threonine biosynthesis; L-threonine from L-aspartate: step 1/5. In terms of biological role, phosphorylates aspartate, the first step in the biosynthesis of amino acids that derive from aspartate (the aspartate family of amino acids), including methioinine and threonine, the latter of which is a precursor to isoleucine. This chain is Aspartokinase, found in Schizosaccharomyces pombe (strain 972 / ATCC 24843) (Fission yeast).